A 257-amino-acid polypeptide reads, in one-letter code: 1-(5-phosphoribosyl)-5-[(5-phosphoribosylamino)methylideneamino] imidazole-4-carboxamide isomerase (257 aa).

D8 (proton acceptor) is an active-site residue. Residue D129 is the Proton donor of the active site.

The protein belongs to the HisA/HisF family.

It localises to the cytoplasm. The catalysed reaction is 1-(5-phospho-beta-D-ribosyl)-5-[(5-phospho-beta-D-ribosylamino)methylideneamino]imidazole-4-carboxamide = 5-[(5-phospho-1-deoxy-D-ribulos-1-ylimino)methylamino]-1-(5-phospho-beta-D-ribosyl)imidazole-4-carboxamide. Its pathway is amino-acid biosynthesis; L-histidine biosynthesis; L-histidine from 5-phospho-alpha-D-ribose 1-diphosphate: step 4/9. The chain is 1-(5-phosphoribosyl)-5-[(5-phosphoribosylamino)methylideneamino] imidazole-4-carboxamide isomerase from Trichormus variabilis (strain ATCC 29413 / PCC 7937) (Anabaena variabilis).